A 91-amino-acid chain; its full sequence is Small ribosomal subunit protein uS19 (91 aa).

The protein belongs to the universal ribosomal protein uS19 family.

Its function is as follows. Protein S19 forms a complex with S13 that binds strongly to the 16S ribosomal RNA. The sequence is that of Small ribosomal subunit protein uS19 from Pseudomonas syringae pv. tomato (strain ATCC BAA-871 / DC3000).